Reading from the N-terminus, the 496-residue chain is Cobyric acid synthase (496 aa).

In terms of domain architecture, GATase cobBQ-type spans 252–442 (DLAVAVIRLP…LHGCFDSDTY (191 aa)). C333 acts as the Nucleophile in catalysis. Residue H434 is part of the active site.

It belongs to the CobB/CobQ family. CobQ subfamily.

The protein operates within cofactor biosynthesis; adenosylcobalamin biosynthesis. Catalyzes amidations at positions B, D, E, and G on adenosylcobyrinic A,C-diamide. NH(2) groups are provided by glutamine, and one molecule of ATP is hydrogenolyzed for each amidation. The sequence is that of Cobyric acid synthase from Desulforudis audaxviator (strain MP104C).